A 387-amino-acid chain; its full sequence is MFYSFCKVGQYMTYFKFELIHRSKKSRARVGRIHTPHGIIDTPNFVAVGTNGTVKALNNTMLHDIGLQLMFCNTYHMMLQPGTDIVRQAGGLHSFIQRKLPIITDSGGFQVFSLAYGSVADELKSRGTKKQGGCVLKITEEGVLFRSYRDGSKVLLTPESSIKAQKDLGADIIIPFDELPPYHIARDALKKSLDRTHRWEKRSLEAHLKNPQEQAMYAVVHGGIDPDLRKESCAILTELPFDGFAVGGSMGKTKDEMHTLLSLTLPLLPEDKPNHLLGIGDLPSIERSVPLGIDTFDSSYPTRAARHGILLTKQGPLNITKSEYATNFNSIEKGCLCPACHHFSLAYIHHLFKARELTCMSLATVHNLYFMVQLMEKYRKQIQEDLI.

The active-site Proton acceptor is the Asp105. Substrate contacts are provided by residues 105–109, Asp177, and Gly248; that span reads DSGGF. Residues 278–284 are RNA binding; sequence GIGDLPS. The active-site Nucleophile is the Asp297. Positions 302-306 are RNA binding; important for wobble base 34 recognition; the sequence is TRAAR. Residues Cys335, Cys337, Cys340, and His366 each coordinate Zn(2+).

This sequence belongs to the queuine tRNA-ribosyltransferase family. Homodimer. Within each dimer, one monomer is responsible for RNA recognition and catalysis, while the other monomer binds to the replacement base PreQ1. Zn(2+) serves as cofactor.

The catalysed reaction is 7-aminomethyl-7-carbaguanine + guanosine(34) in tRNA = 7-aminomethyl-7-carbaguanosine(34) in tRNA + guanine. It functions in the pathway tRNA modification; tRNA-queuosine biosynthesis. In terms of biological role, catalyzes the base-exchange of a guanine (G) residue with the queuine precursor 7-aminomethyl-7-deazaguanine (PreQ1) at position 34 (anticodon wobble position) in tRNAs with GU(N) anticodons (tRNA-Asp, -Asn, -His and -Tyr). Catalysis occurs through a double-displacement mechanism. The nucleophile active site attacks the C1' of nucleotide 34 to detach the guanine base from the RNA, forming a covalent enzyme-RNA intermediate. The proton acceptor active site deprotonates the incoming PreQ1, allowing a nucleophilic attack on the C1' of the ribose to form the product. After dissociation, two additional enzymatic reactions on the tRNA convert PreQ1 to queuine (Q), resulting in the hypermodified nucleoside queuosine (7-(((4,5-cis-dihydroxy-2-cyclopenten-1-yl)amino)methyl)-7-deazaguanosine). The sequence is that of Queuine tRNA-ribosyltransferase from Protochlamydia amoebophila (strain UWE25).